Consider the following 338-residue polypeptide: Mitochondrial transcription factor 1 (338 aa).

S-adenosyl-L-methionine-binding residues include leucine 23, aspartate 76, aspartate 100, and asparagine 136.

This sequence belongs to the class I-like SAM-binding methyltransferase superfamily. rRNA adenine N(6)-methyltransferase family.

It localises to the mitochondrion. Mitochondrial transcription factor that confers selective promoter recognition on the core subunit of the yeast mitochondrial RNA polymerase. Interacts with DNA in a non-specific manner. This Lachancea kluyveri (Yeast) protein is Mitochondrial transcription factor 1 (MTF1).